The chain runs to 290 residues: Arylamine N-acetyltransferase 2 (290 aa).

The Acyl-thioester intermediate role is filled by Cys68. Residues Ser103 and Gly104 each contribute to the CoA site. Residue 106–107 (IH) participates in substrate binding. Residues His107 and Asp122 contribute to the active site. Tyr208 lines the CoA pocket.

The protein belongs to the arylamine N-acetyltransferase family.

Its subcellular location is the cytoplasm. It carries out the reaction an arylamine + acetyl-CoA = an N-acetylarylamine + CoA. The enzyme catalyses an N-hydroxyarylamine + acetyl-CoA = an N-acetoxyarylamine + CoA. In terms of biological role, catalyzes the N- or O-acetylation of various arylamine and heterocyclic amine substrates, and participates in the detoxification of a plethora of hydrazine and arylamine drugs. The chain is Arylamine N-acetyltransferase 2 (NAT2) from Mesocricetus auratus (Golden hamster).